Here is an 87-residue protein sequence, read N- to C-terminus: Large ribosomal subunit protein bL31B (87 aa).

It belongs to the bacterial ribosomal protein bL31 family. Type B subfamily. As to quaternary structure, part of the 50S ribosomal subunit.

The chain is Large ribosomal subunit protein bL31B from Burkholderia ambifaria (strain MC40-6).